We begin with the raw amino-acid sequence, 3461 residues long: Reelin (3461 aa).

The first 26 residues, 1–26 (MERGCWAPRALVLAVLLLLATLRARA), serve as a signal peptide directing secretion. Positions 27-191 (ATGYYPRFSP…GAPTEATAYS (165 aa)) constitute a Reelin domain. Cysteine 41 and cysteine 127 are disulfide-bonded. Asparagine 141 is a glycosylation site (N-linked (GlcNAc...) asparagine). Cysteine 155 and cysteine 179 are disulfide-bonded. N-linked (GlcNAc...) asparagine glycans are attached at residues asparagine 258, asparagine 290, and asparagine 306. Cysteines 540 and 581 form a disulfide. One copy of the BNR 1 repeat lies at 593–604 (EFSTNHGRSWSL). Residues cysteine 609 and cysteine 614 are joined by a disulfide bond. Asparagine 629 carries an N-linked (GlcNAc...) asparagine glycan. Residues 671-702 (IGPSCLKFCSGRGQCTRHGCKCDPGFSGPACE) enclose the EGF-like 1 domain. Disulfide bonds link cysteine 675–cysteine 685 and cysteine 692–cysteine 701. The BNR 2 repeat unit spans residues 799-810 (HYSYDNGITWKL). Cysteine 895 and cysteine 937 are joined by a disulfide. The BNR 3 repeat unit spans residues 952-963 (EYSANHGLTWHL). 3 disulfides stabilise this stretch: cysteine 968-cysteine 975, cysteine 1034-cysteine 1044, and cysteine 1051-cysteine 1060. The EGF-like 2 domain occupies 1030 to 1061 (IGQQCPNMCSGHGSCDHGVCRCDQGYQGTECH). The stretch at 1157-1168 (QYSNNGGIQWHL) is one BNR 4 repeat. Asparagine 1267 carries an N-linked (GlcNAc...) asparagine glycan. The BNR 5 repeat unit spans residues 1323 to 1334 (QYSHDAGMSWFL). 4 disulfides stabilise this stretch: cysteine 1339-cysteine 1348, cysteine 1413-cysteine 1423, cysteine 1417-cysteine 1428, and cysteine 1430-cysteine 1441. An EGF-like 3 domain is found at 1409–1442 (ISEPCPSYCSGHGDCISGVCFCDLGYTAAQGTCV). Asparagine 1447 carries N-linked (GlcNAc...) asparagine glycosylation. A disulfide bridge connects residues cysteine 1475 and cysteine 1522. The BNR 6 repeat unit spans residues 1535-1546 (QYSNDNGILWHL). A glycan (N-linked (GlcNAc...) asparagine) is linked at asparagine 1600. Cysteine 1633 and cysteine 1673 are joined by a disulfide. The stretch at 1686 to 1697 (QYSLNNGKDWQL) is one BNR 7 repeat. The cysteines at positions 1702 and 1709 are disulfide-linked. The N-linked (GlcNAc...) asparagine glycan is linked to asparagine 1750. One can recognise an EGF-like 4 domain in the interval 1765-1796 (LASGCPWMCSGRGICDSGRCVCDRGFGGPFCV). Residues 1884 to 1895 (QFSVSGGVTWHL) form a BNR 8 repeat. Asparagine 1921 carries N-linked (GlcNAc...) asparagine glycosylation. Cysteine 1983 and cysteine 2030 are disulfide-bonded. Residues 2043–2054 (EFSRDFGATWHL) form a BNR 9 repeat. Cysteine 2059 and cysteine 2070 form a disulfide bridge. Positions 2061 and 2074 each coordinate Zn(2+). The EGF-like 5 domain maps to 2129–2161 (IGPQCEEMCYGHGSCINGTKCICDPGYSGPTCK). Disulfide bonds link cysteine 2133–cysteine 2143, cysteine 2137–cysteine 2149, and cysteine 2151–cysteine 2160. Residue asparagine 2145 is glycosylated (N-linked (GlcNAc...) asparagine). Residue glutamate 2179 coordinates Zn(2+). Cysteines 2195 and 2235 form a disulfide. The stretch at 2250 to 2261 (QYSLNGGLSWSL) is one BNR 10 repeat. A Zn(2+)-binding site is contributed by glutamate 2264. Residues asparagine 2269 and asparagine 2317 are each glycosylated (N-linked (GlcNAc...) asparagine). Intrachain disulfides connect cysteine 2348–cysteine 2387, cysteine 2393–cysteine 2559, cysteine 2482–cysteine 2492, cysteine 2486–cysteine 2497, cysteine 2499–cysteine 2508, and cysteine 2544–cysteine 2584. Glutamate 2397, glutamate 2399, and histidine 2460 together coordinate Zn(2+). The BNR 11 repeat unit spans residues 2399–2410 (EYSVDLGLSWHP). Residues 2478 to 2509 (IGDGCLDMCSGHGRCVQGSCVCDEQWGGLYCD) enclose the EGF-like 6 domain. Asparagine 2569 carries N-linked (GlcNAc...) asparagine glycosylation. 2 BNR repeats span residues 2598–2609 (EYSVNGGITWNL) and 2778–2789 (QFSTDFGVSWSY). Residues cysteine 2794 and cysteine 2801 are joined by a disulfide bond. The 32-residue stretch at 2853–2884 (LGPGCLDNCGGHGDCLKEQCICDPGYSGPNCY) folds into the EGF-like 7 domain. Cysteine 2919 and cysteine 2966 form a disulfide bridge. The N-linked (GlcNAc...) asparagine glycan is linked to asparagine 2962. The stretch at 2979 to 2990 (DFSTDGGITWTL) is one BNR 14 repeat. N-linked (GlcNAc...) asparagine glycosylation is found at asparagine 3016 and asparagine 3073. One copy of the BNR 15 repeat lies at 3143–3155 (EYTKDARSDSWQL). An intrachain disulfide couples cysteine 3160 to cysteine 3170. N-linked (GlcNAc...) asparagine glycosylation occurs at asparagine 3185. The 33-residue stretch at 3228–3260 (IGEACPKLCSGHGYCTTGAVCICDESFQGDDCS) folds into the EGF-like 8 domain. Intrachain disulfides connect cysteine 3232-cysteine 3242, cysteine 3236-cysteine 3248, cysteine 3250-cysteine 3259, and cysteine 3296-cysteine 3346. The stretch at 3363 to 3374 (QYSVNNGITWHV) is one BNR 16 repeat. N-linked (GlcNAc...) asparagine glycosylation is found at asparagine 3412 and asparagine 3439.

It belongs to the reelin family. In terms of assembly, oligomer of disulfide-linked homodimers. In terms of processing, N-glycosylated and to a lesser extent also O-glycosylated. In terms of tissue distribution, the major isoform 1 is neuron-specific. It is abundantly produced during brain ontogenesis by the Cajal-Retzius cells and other pioneer neurons located in the telencephalic marginal zone and by granule cells of the external granular layer of the cerebellum. Expression is located in deeper layers in the developing hippocampus and olfactory bulb, low levels of expression are also detected in the immature striatum. At early developmental stages, expressed also in hypothalamic differentiation fields, tectum and spinal cord. A moderate to low level of expression occurs in the septal area, striatal fields, habenular nuclei, some thalamic nuclei, particularly the lateral geniculate, the retina and some nuclei of the reticular formation in the central field of the medulla. Very low levels found in liver and kidney. No expression in radial glial cells, cortical plate, Purkinje cells and inferior olivary neurons. The minor isoform 2 is only expressed in non neuronal cells. The minor isoform 3 is found in the same cells as isoform 1, but is almost undetectable in retina and brain stem.

The protein resides in the secreted. It is found in the extracellular space. It localises to the extracellular matrix. Functionally, extracellular matrix serine protease secreted by pioneer neurons that plays a role in layering of neurons in the cerebral cortex and cerebellum by coordinating cell positioning during neurodevelopment. Regulates microtubule function in neurons and neuronal migration. Binding to the extracellular domains of lipoprotein receptors VLDLR and LRP8/APOER2 induces tyrosine phosphorylation of DAB1 and modulation of TAU phosphorylation. Affects migration of sympathetic preganglionic neurons in the spinal cord, where it seems to act as a barrier to neuronal migration. Enzymatic activity is important for the modulation of cell adhesion. In Mus musculus (Mouse), this protein is Reelin (Reln).